Here is a 362-residue protein sequence, read N- to C-terminus: Microfibril-associated glycoprotein 3 (362 aa).

The N-terminal stretch at 1–19 (MKLHCCLFTLVASIIVPAA) is a signal peptide. Over 20–146 (FVLEDVDFNQ…TLRVIFTSGD (127 aa)) the chain is Extracellular. 3 N-linked (GlcNAc...) asparagine glycosylation sites follow: Asn36, Asn41, and Asn110. One can recognise an Ig-like C2-type domain in the interval 45–137 (PSSFELSASS…SPIRASYSVT (93 aa)). An intrachain disulfide couples Cys73 to Cys124. A helical transmembrane segment spans residues 147–167 (MSVYYMIVCLIAFTITLILNV). Residues 168–362 (TRLCMMSSHL…KDGAYENSQL (195 aa)) lie on the Cytoplasmic side of the membrane. Disordered stretches follow at residues 282–306 (GIYVINPEMGRSNSPGGDSDDGSLN) and 319–362 (HLQS…NSQL). Residues 319–337 (HLQSETKSIDTESQGSSHF) show a composition bias toward polar residues.

In terms of processing, glycosylated.

It is found in the cell membrane. Functionally, component of the elastin-associated microfibrils. The polypeptide is Microfibril-associated glycoprotein 3 (MFAP3) (Pongo abelii (Sumatran orangutan)).